The following is a 188-amino-acid chain: Putative manganese efflux pump MntP (188 aa).

6 consecutive transmembrane segments (helical) span residues 3–23, 41–61, 66–86, 107–129, 143–163, and 168–188; these read ITAT…ASIG, LIFG…GMLA, LEWN…RMII, LLVT…LAFL, ATLI…PLLG, and ILGG…HFHG.

It belongs to the MntP (TC 9.B.29) family.

The protein localises to the cell inner membrane. In terms of biological role, probably functions as a manganese efflux pump. In Citrobacter koseri (strain ATCC BAA-895 / CDC 4225-83 / SGSC4696), this protein is Putative manganese efflux pump MntP.